The following is a 620-amino-acid chain: Arginine--tRNA ligase (620 aa).

Positions 147–157 (ANPTGPIHIGG) match the 'HIGH' region motif.

It belongs to the class-I aminoacyl-tRNA synthetase family. Monomer.

It localises to the cytoplasm. It catalyses the reaction tRNA(Arg) + L-arginine + ATP = L-arginyl-tRNA(Arg) + AMP + diphosphate. This chain is Arginine--tRNA ligase, found in Bifidobacterium longum (strain DJO10A).